The following is a 900-amino-acid chain: Isoleucine--tRNA ligase (900 aa).

Positions 58 to 68 (PYANGNIHIGH) match the 'HIGH' region motif. Position 552 (Glu-552) interacts with L-isoleucyl-5'-AMP. The 'KMSKS' region motif lies at 593–597 (KMSKS). Residue Lys-596 participates in ATP binding.

This sequence belongs to the class-I aminoacyl-tRNA synthetase family. IleS type 1 subfamily. As to quaternary structure, monomer.

Its subcellular location is the cytoplasm. The enzyme catalyses tRNA(Ile) + L-isoleucine + ATP = L-isoleucyl-tRNA(Ile) + AMP + diphosphate. In terms of biological role, catalyzes the attachment of isoleucine to tRNA(Ile). As IleRS can inadvertently accommodate and process structurally similar amino acids such as valine, to avoid such errors it has two additional distinct tRNA(Ile)-dependent editing activities. One activity is designated as 'pretransfer' editing and involves the hydrolysis of activated Val-AMP. The other activity is designated 'posttransfer' editing and involves deacylation of mischarged Val-tRNA(Ile). In Ureaplasma parvum serovar 3 (strain ATCC 700970), this protein is Isoleucine--tRNA ligase.